A 258-amino-acid polypeptide reads, in one-letter code: Pimeloyl-[acyl-carrier protein] methyl ester esterase (258 aa).

Positions 16 to 242 constitute an AB hydrolase-1 domain; it reads LVLLHGWGLN…AAHAPFISHP (227 aa). Substrate contacts are provided by residues Trp22, 82–83, and 143–147; these read SL and FLALQ. The Nucleophile role is filled by Ser82. Active-site residues include Asp207 and His235. A substrate-binding site is contributed by His235.

Belongs to the AB hydrolase superfamily. Carboxylesterase BioH family. As to quaternary structure, monomer.

It is found in the cytoplasm. It catalyses the reaction 6-carboxyhexanoyl-[ACP] methyl ester + H2O = 6-carboxyhexanoyl-[ACP] + methanol + H(+). Its pathway is cofactor biosynthesis; biotin biosynthesis. The physiological role of BioH is to remove the methyl group introduced by BioC when the pimeloyl moiety is complete. It allows to synthesize pimeloyl-ACP via the fatty acid synthetic pathway through the hydrolysis of the ester bonds of pimeloyl-ACP esters. The chain is Pimeloyl-[acyl-carrier protein] methyl ester esterase from Edwardsiella ictaluri (strain 93-146).